We begin with the raw amino-acid sequence, 191 residues long: Signal peptidase complex catalytic subunit sec11 (191 aa).

Residues 1–18 lie on the Cytoplasmic side of the membrane; the sequence is MLSFLSSNLSNVRQSLAQ. Residues 19-39 form a helical; Signal-anchor for type II membrane protein membrane-spanning segment; that stretch reads VLNFALVLSTAFMMWKGLSVF. The Lumenal segment spans residues 40–191; it reads TASSSPVVVV…MGLMVMLQRE (152 aa). Residues Ser53, His92, and Asp133 each act as charge relay system in the active site. Residues 177 to 188 are C-terminal short (CTS) helix; that stretch reads ALLGIMGLMVML.

Belongs to the peptidase S26B family. In terms of assembly, component of the signal peptidase complex (SPC) composed of a catalytic subunit SEC11 and three accessory subunits SPC1, SPC2 and SPC3. The complex induces a local thinning of the ER membrane which is used to measure the length of the signal peptide (SP) h-region of protein substrates. This ensures the selectivity of the complex towards h-regions shorter than 18-20 amino acids. SPC associates with the translocon complex.

The protein resides in the endoplasmic reticulum membrane. It carries out the reaction Cleavage of hydrophobic, N-terminal signal or leader sequences from secreted and periplasmic proteins.. Functionally, catalytic component of the signal peptidase complex (SPC) which catalyzes the cleavage of N-terminal signal sequences from nascent proteins as they are translocated into the lumen of the endoplasmic reticulum. Specifically cleaves N-terminal signal peptides that contain a hydrophobic alpha-helix (h-region) shorter than 18-20 amino acids. The protein is Signal peptidase complex catalytic subunit sec11 (sec11) of Aspergillus oryzae (strain ATCC 42149 / RIB 40) (Yellow koji mold).